Here is a 424-residue protein sequence, read N- to C-terminus: Serine--tRNA ligase (424 aa).

Threonine 233–glutamate 235 contributes to the L-serine binding site. Arginine 264 to glutamate 266 contributes to the ATP binding site. Glutamate 287 contacts L-serine. Glutamate 351–serine 354 lines the ATP pocket. Residue serine 386 participates in L-serine binding.

The protein belongs to the class-II aminoacyl-tRNA synthetase family. Type-1 seryl-tRNA synthetase subfamily. As to quaternary structure, homodimer. The tRNA molecule binds across the dimer.

It localises to the cytoplasm. The catalysed reaction is tRNA(Ser) + L-serine + ATP = L-seryl-tRNA(Ser) + AMP + diphosphate + H(+). It carries out the reaction tRNA(Sec) + L-serine + ATP = L-seryl-tRNA(Sec) + AMP + diphosphate + H(+). It functions in the pathway aminoacyl-tRNA biosynthesis; selenocysteinyl-tRNA(Sec) biosynthesis; L-seryl-tRNA(Sec) from L-serine and tRNA(Sec): step 1/1. In terms of biological role, catalyzes the attachment of serine to tRNA(Ser). Is also able to aminoacylate tRNA(Sec) with serine, to form the misacylated tRNA L-seryl-tRNA(Sec), which will be further converted into selenocysteinyl-tRNA(Sec). This chain is Serine--tRNA ligase, found in Elusimicrobium minutum (strain Pei191).